The following is a 147-amino-acid chain: Lipoprotein YafY (147 aa).

The N-terminal stretch at 1-20 (MKRKTLPLLALVATTLFLIA) is a signal peptide. Cysteine 21 is lipidated: N-palmitoyl cysteine. Cysteine 21 carries S-diacylglycerol cysteine lipidation.

The protein to E.coli YfjS.

It localises to the cell inner membrane. Its function is as follows. When overproduced strongly induces degP through the activation of the two-component envelope stress response system CpxA/CpxR. This Escherichia coli (strain K12) protein is Lipoprotein YafY (yafY).